The primary structure comprises 454 residues: Protein phosphatase 1F (454 aa).

The segment covering 1 to 12 (MSSGAPQKSSPM) has biased composition (polar residues). A disordered region spans residues 1-28 (MSSGAPQKSSPMASGAEETPGFLDTLLQ). Positions 156 to 413 (LVSIHAIRNT…DNITVMVVFL (258 aa)) constitute a PPM-type phosphatase domain. Residues Asp-198, Gly-199, Asp-360, and Asp-404 each coordinate Mn(2+). The disordered stretch occupies residues 419-454 (LLEGGNQGEGDPQAEGRRQDLPSSLPEPETQAPPRS). Ser-454 bears the Phosphoserine mark.

It belongs to the PP2C family. Associates with FEM1B. Mg(2+) serves as cofactor. Requires Mn(2+) as cofactor.

The catalysed reaction is O-phospho-L-seryl-[protein] + H2O = L-seryl-[protein] + phosphate. The enzyme catalyses O-phospho-L-threonyl-[protein] + H2O = L-threonyl-[protein] + phosphate. In terms of biological role, dephosphorylates and concomitantly deactivates CaM-kinase II activated upon autophosphorylation, and CaM-kinases IV and I activated upon phosphorylation by CaM-kinase kinase. Promotes apoptosis. The sequence is that of Protein phosphatase 1F (PPM1F) from Homo sapiens (Human).